The following is a 240-amino-acid chain: Probable transcriptional regulatory protein Hac_0344 (240 aa).

It belongs to the TACO1 family.

It is found in the cytoplasm. The chain is Probable transcriptional regulatory protein Hac_0344 from Helicobacter acinonychis (strain Sheeba).